A 388-amino-acid polypeptide reads, in one-letter code: Succinate--CoA ligase [ADP-forming] subunit beta (388 aa).

One can recognise an ATP-grasp domain in the interval 9 to 244 (KEILRKFGVA…LDEEDPAEIE (236 aa)). ATP is bound by residues K46, 53 to 55 (GRG), E99, A102, and E107. N199 and D213 together coordinate Mg(2+). Residues N264 and 321–323 (GIM) contribute to the substrate site.

The protein belongs to the succinate/malate CoA ligase beta subunit family. In terms of assembly, heterotetramer of two alpha and two beta subunits. The cofactor is Mg(2+).

It catalyses the reaction succinate + ATP + CoA = succinyl-CoA + ADP + phosphate. The enzyme catalyses GTP + succinate + CoA = succinyl-CoA + GDP + phosphate. It functions in the pathway carbohydrate metabolism; tricarboxylic acid cycle; succinate from succinyl-CoA (ligase route): step 1/1. Succinyl-CoA synthetase functions in the citric acid cycle (TCA), coupling the hydrolysis of succinyl-CoA to the synthesis of either ATP or GTP and thus represents the only step of substrate-level phosphorylation in the TCA. The beta subunit provides nucleotide specificity of the enzyme and binds the substrate succinate, while the binding sites for coenzyme A and phosphate are found in the alpha subunit. The chain is Succinate--CoA ligase [ADP-forming] subunit beta from Burkholderia multivorans (strain ATCC 17616 / 249).